Consider the following 206-residue polypeptide: FMN-dependent NADH:quinone oxidoreductase (206 aa).

FMN is bound by residues Ser9, 15 to 17 (SVS), and 139 to 142 (SRGG).

Belongs to the azoreductase type 1 family. In terms of assembly, homodimer. It depends on FMN as a cofactor.

It carries out the reaction 2 a quinone + NADH + H(+) = 2 a 1,4-benzosemiquinone + NAD(+). It catalyses the reaction N,N-dimethyl-1,4-phenylenediamine + anthranilate + 2 NAD(+) = 2-(4-dimethylaminophenyl)diazenylbenzoate + 2 NADH + 2 H(+). Functionally, quinone reductase that provides resistance to thiol-specific stress caused by electrophilic quinones. Also exhibits azoreductase activity. Catalyzes the reductive cleavage of the azo bond in aromatic azo compounds to the corresponding amines. This is FMN-dependent NADH:quinone oxidoreductase from Cupriavidus necator (strain ATCC 17699 / DSM 428 / KCTC 22496 / NCIMB 10442 / H16 / Stanier 337) (Ralstonia eutropha).